A 159-amino-acid chain; its full sequence is D-aminoacyl-tRNA deacylase (159 aa).

The Gly-cisPro motif, important for rejection of L-amino acids motif lies at 146 to 147 (GP).

It belongs to the DTD family. In terms of assembly, homodimer.

It is found in the cytoplasm. It carries out the reaction glycyl-tRNA(Ala) + H2O = tRNA(Ala) + glycine + H(+). The catalysed reaction is a D-aminoacyl-tRNA + H2O = a tRNA + a D-alpha-amino acid + H(+). Functionally, an aminoacyl-tRNA editing enzyme that deacylates mischarged D-aminoacyl-tRNAs. Also deacylates mischarged glycyl-tRNA(Ala), protecting cells against glycine mischarging by AlaRS. Acts via tRNA-based rather than protein-based catalysis; rejects L-amino acids rather than detecting D-amino acids in the active site. By recycling D-aminoacyl-tRNA to D-amino acids and free tRNA molecules, this enzyme counteracts the toxicity associated with the formation of D-aminoacyl-tRNA entities in vivo and helps enforce protein L-homochirality. The protein is D-aminoacyl-tRNA deacylase of Bifidobacterium adolescentis (strain ATCC 15703 / DSM 20083 / NCTC 11814 / E194a).